Reading from the N-terminus, the 133-residue chain is uncharacterized protein (133 aa).

The 120-residue stretch at Arg-9 to Leu-128 folds into the Response regulatory domain. Asp-64 is subject to 4-aspartylphosphate.

This is an uncharacterized protein from Mycobacterium tuberculosis (strain CDC 1551 / Oshkosh).